The chain runs to 142 residues: Large ribosomal subunit protein uL13 (142 aa).

It belongs to the universal ribosomal protein uL13 family. Part of the 50S ribosomal subunit.

In terms of biological role, this protein is one of the early assembly proteins of the 50S ribosomal subunit, although it is not seen to bind rRNA by itself. It is important during the early stages of 50S assembly. This is Large ribosomal subunit protein uL13 from Shewanella amazonensis (strain ATCC BAA-1098 / SB2B).